The primary structure comprises 910 residues: Eukaryotic translation initiation factor 3 subunit C (910 aa).

Residues 1-21 (MSRFFANGSDSESESSEDEIQ) form a disordered region. Positions 11 to 20 (SESESSEDEI) are enriched in acidic residues. Phosphoserine is present on residues Ser34, Ser165, Ser176, and Ser185. Residues 157-279 (FREAPDQESE…IRKRAEDDED (123 aa)) form a disordered region. The span at 162–186 (DQESEAEDEVVALESDGGDAGDDSD) shows a compositional bias: acidic residues. Residues 188–207 (GVKPTEAAPKAVKTAPAKAA) are compositionally biased toward low complexity. Over residues 209 to 235 (ADDDDSDDSIDWDSDSESETESSDDEN) the composition is skewed to acidic residues. Residues 240-268 (MRERFLKRTTEKEEKDDDKRKDKRKEQKI) are compositionally biased toward basic and acidic residues. Residues 639 to 815 (FHMHINLELL…ETVVMHRSEP (177 aa)) enclose the PCI domain. The segment at 847 to 910 (FFQRGNMGNR…QQQVQTIDEE (64 aa)) is disordered. The span at 862–874 (NRNQNNQGGNWLG) shows a compositional bias: low complexity. Over residues 882–891 (RNRNQRGHHK) the composition is skewed to basic residues. Residues 895–910 (DRQQQQQQQVQTIDEE) show a composition bias toward low complexity.

It belongs to the eIF-3 subunit C family. As to quaternary structure, component of the eukaryotic translation initiation factor 3 (eIF-3) complex. The eIF-3 complex interacts with pix.

It localises to the cytoplasm. Functionally, component of the eukaryotic translation initiation factor 3 (eIF-3) complex, which is involved in protein synthesis of a specialized repertoire of mRNAs and, together with other initiation factors, stimulates binding of mRNA and methionyl-tRNAi to the 40S ribosome. The eIF-3 complex specifically targets and initiates translation of a subset of mRNAs involved in cell proliferation. In Drosophila erecta (Fruit fly), this protein is Eukaryotic translation initiation factor 3 subunit C.